The sequence spans 189 residues: MVMLLLLLSALAGLFGAAEGQEFRLGKCTSPPVQENFDPNKYFGRWYEIEKIPTTFEKGRCIQANYSLKENGKIKVLNQELRADGTVNQIEGEASPVNITEPAKLEVKFFWFMPSAPYWVLATDYENYALVYSCVSIINLFRVDYAWILARNRHLPSETVDFLKNILTSNNIDVKKMTVTDQENCPEFS.

Positions 1 to 20 are cleaved as a signal peptide; the sequence is MVMLLLLLSALAGLFGAAEG. Gln21 carries the post-translational modification Pyrrolidone carboxylic acid. Intrachain disulfides connect Cys28–Cys134 and Cys61–Cys185. 2 N-linked (GlcNAc...) asparagine glycosylation sites follow: Asn65 and Asn98.

It belongs to the calycin superfamily. Lipocalin family. In terms of assembly, homodimer.

The protein localises to the secreted. Functionally, APOD occurs in the macromolecular complex with lecithin-cholesterol acyltransferase. It is probably involved in the transport and binding of bilin. Appears to be able to transport a variety of ligands in a number of different contexts. This chain is Apolipoprotein D (APOD), found in Macaca fascicularis (Crab-eating macaque).